A 175-amino-acid polypeptide reads, in one-letter code: uncharacterized protein (175 aa).

A disordered region spans residues 113 to 175 (AQLPRDSRGN…RTRSGGLERL (63 aa)).

This is an uncharacterized protein from Bos taurus (Bovine).